The sequence spans 64 residues: Cytochrome c oxidase subunit 5C (64 aa).

A helical transmembrane segment spans residues 16-34 (VVKELVIGFSLGLVAGGFW).

It belongs to the cytochrome c oxidase subunit 5C family. Sweet potato cytochrome C oxidase consists of at least seven different polypeptides species, subunits I, II, III, IV, Va, Vb, and Vc in order of MW.

It is found in the mitochondrion inner membrane. Functionally, this protein is one of the nuclear-coded polypeptide chains of cytochrome c oxidase, the terminal oxidase in mitochondrial electron transport. This Ipomoea batatas (Sweet potato) protein is Cytochrome c oxidase subunit 5C (COX5C).